We begin with the raw amino-acid sequence, 208 residues long: Ribosome maturation factor RimP (208 aa).

Residues 175–208 (GEDVEDLVADPGADDELDELDELDELDDGDEDEQ) are disordered. Residues 177–208 (DVEDLVADPGADDELDELDELDELDDGDEDEQ) show a composition bias toward acidic residues.

It belongs to the RimP family.

It is found in the cytoplasm. Its function is as follows. Required for maturation of 30S ribosomal subunits. This chain is Ribosome maturation factor RimP, found in Kineococcus radiotolerans (strain ATCC BAA-149 / DSM 14245 / SRS30216).